Reading from the N-terminus, the 456-residue chain is MTQQLVKKGQQISLKIKRLGINGEGIGYYKKLIIFVPGALPKEEVTATITNVTPKFAEGTLQSVKKAAKDRVVPPCPVYETCGGCQLQHLAYKAQLDFKKDLLKQALNKFKPANYQNYELRKTIGMDNPWNYRNKAQFQLRQIDGQVEAGLYQADSHQLVPIDNCLVQQPATTKVMNTLVDLLNDFQLPIYDERKNSGIFRTLMVRVGIQTGEVQVVFITQSQKFPQKEKMVRAINEQLPEVVSIMQNVQNKKTSLVMGDDTLHLWGKESIEEHINDVVFDLSPRAFFQLNPEQTEVLYNEGIKALDLQPNETVVDAYCGVGTIGLSLAKQAHQVRGMDTIPAAIDDARFNAKRLGVTNTHYAVGTAEDLLPKWFKEGFKPDAIVVDPPRTGLDRKLLTALLKQPPKKMVYISCNVSTLARDLVQLAKVYQVDYLQSVDMFPQTARCEVVVKLTRK.

One can recognise a TRAM domain in the interval 5-63 (LVKKGQQISLKIKRLGINGEGIGYYKKLIIFVPGALPKEEVTATITNVTPKFAEGTLQS). Residues Cys-76, Cys-82, Cys-85, and Cys-165 each coordinate [4Fe-4S] cluster. S-adenosyl-L-methionine is bound by residues Gln-289, Tyr-318, Asp-339, and Asp-387. Cys-414 serves as the catalytic Nucleophile.

The protein belongs to the class I-like SAM-binding methyltransferase superfamily. RNA M5U methyltransferase family.

This is an uncharacterized protein from Enterococcus faecalis (strain ATCC 700802 / V583).